The following is a 240-amino-acid chain: Large ribosomal subunit protein bL25 (240 aa).

The tract at residues 1-23 is disordered; it reads MATVKELKATARPKAGKGAARAE. Over residues 10–19 the composition is skewed to low complexity; that stretch reads TARPKAGKGA.

This sequence belongs to the bacterial ribosomal protein bL25 family. CTC subfamily. As to quaternary structure, part of the 50S ribosomal subunit; part of the 5S rRNA/L5/L18/L25 subcomplex. Contacts the 5S rRNA. Binds to the 5S rRNA independently of L5 and L18.

In terms of biological role, this is one of the proteins that binds to the 5S RNA in the ribosome where it forms part of the central protuberance. The sequence is that of Large ribosomal subunit protein bL25 from Afipia carboxidovorans (strain ATCC 49405 / DSM 1227 / KCTC 32145 / OM5) (Oligotropha carboxidovorans).